The chain runs to 165 residues: Interferon gamma (165 aa).

An N-terminal signal peptide occupies residues 1-23 (MKYTSYILAFQLCIVLGSLGCYC). Q24 carries the post-translational modification Pyrrolidone carboxylic acid. N48 and N120 each carry an N-linked (GlcNAc...) asparagine glycan.

This sequence belongs to the type II (or gamma) interferon family. In terms of assembly, homodimer. Interacts with IFNGR1 (via extracellular domain); this interaction promotes IFNGR1 dimerization. Released primarily from activated T lymphocytes.

The protein localises to the secreted. In terms of biological role, type II interferon produced by immune cells such as T-cells and NK cells that plays crucial roles in antimicrobial, antiviral, and antitumor responses by activating effector immune cells and enhancing antigen presentation. Primarily signals through the JAK-STAT pathway after interaction with its receptor IFNGR1 to affect gene regulation. Upon IFNG binding, IFNGR1 intracellular domain opens out to allow association of downstream signaling components JAK2, JAK1 and STAT1, leading to STAT1 activation, nuclear translocation and transcription of IFNG-regulated genes. Many of the induced genes are transcription factors such as IRF1 that are able to further drive regulation of a next wave of transcription. Plays a role in class I antigen presentation pathway by inducing a replacement of catalytic proteasome subunits with immunoproteasome subunits. In turn, increases the quantity, quality, and repertoire of peptides for class I MHC loading. Increases the efficiency of peptide generation also by inducing the expression of activator PA28 that associates with the proteasome and alters its proteolytic cleavage preference. Up-regulates as well MHC II complexes on the cell surface by promoting expression of several key molecules such as cathepsins B/CTSB, H/CTSH, and L/CTSL. Participates in the regulation of hematopoietic stem cells during development and under homeostatic conditions by affecting their development, quiescence, and differentiation. This chain is Interferon gamma (IFNG), found in Macaca fascicularis (Crab-eating macaque).